The sequence spans 719 residues: DNA ligase (719 aa).

NAD(+)-binding positions include 42–46 (DAEYD), 91–92 (SL), and Glu-125. The active-site N6-AMP-lysine intermediate is the Lys-127. NAD(+) contacts are provided by Arg-148, Glu-184, Lys-300, and Lys-324. Cys-429, Cys-432, Cys-447, and Cys-453 together coordinate Zn(2+). The BRCT domain occupies 638–719 (TASSPIAGKT…WLQLIEGSYI (82 aa)).

The protein belongs to the NAD-dependent DNA ligase family. LigA subfamily. The cofactor is Mg(2+). It depends on Mn(2+) as a cofactor.

The catalysed reaction is NAD(+) + (deoxyribonucleotide)n-3'-hydroxyl + 5'-phospho-(deoxyribonucleotide)m = (deoxyribonucleotide)n+m + AMP + beta-nicotinamide D-nucleotide.. DNA ligase that catalyzes the formation of phosphodiester linkages between 5'-phosphoryl and 3'-hydroxyl groups in double-stranded DNA using NAD as a coenzyme and as the energy source for the reaction. It is essential for DNA replication and repair of damaged DNA. The sequence is that of DNA ligase from Bartonella quintana (strain Toulouse) (Rochalimaea quintana).